The chain runs to 488 residues: Glutamyl-tRNA(Gln) amidotransferase subunit A (488 aa).

Catalysis depends on charge relay system residues lysine 79 and serine 159. Catalysis depends on serine 183, which acts as the Acyl-ester intermediate.

This sequence belongs to the amidase family. GatA subfamily. Heterotrimer of A, B and C subunits.

The catalysed reaction is L-glutamyl-tRNA(Gln) + L-glutamine + ATP + H2O = L-glutaminyl-tRNA(Gln) + L-glutamate + ADP + phosphate + H(+). Allows the formation of correctly charged Gln-tRNA(Gln) through the transamidation of misacylated Glu-tRNA(Gln) in organisms which lack glutaminyl-tRNA synthetase. The reaction takes place in the presence of glutamine and ATP through an activated gamma-phospho-Glu-tRNA(Gln). The sequence is that of Glutamyl-tRNA(Gln) amidotransferase subunit A from Wolbachia pipientis subsp. Culex pipiens (strain wPip).